A 374-amino-acid polypeptide reads, in one-letter code: Chaperone protein DnaJ (374 aa).

The J domain maps to 5-70 (DYYEVLGVAR…DKRARYDRFG (66 aa)). The segment at 135–213 (GDEVTLRLPK…CKGSGILQQV (79 aa)) adopts a CR-type zinc-finger fold. Zn(2+) contacts are provided by cysteine 148, cysteine 151, cysteine 165, cysteine 168, cysteine 187, cysteine 190, cysteine 201, and cysteine 204. 4 CXXCXGXG motif repeats span residues 148–155 (CDECNGSG), 165–172 (CRHCGGNG), 187–194 (CPVCRGEG), and 201–208 (CPKCKGSG).

This sequence belongs to the DnaJ family. Homodimer. Zn(2+) is required as a cofactor.

It localises to the cytoplasm. In terms of biological role, participates actively in the response to hyperosmotic and heat shock by preventing the aggregation of stress-denatured proteins and by disaggregating proteins, also in an autonomous, DnaK-independent fashion. Unfolded proteins bind initially to DnaJ; upon interaction with the DnaJ-bound protein, DnaK hydrolyzes its bound ATP, resulting in the formation of a stable complex. GrpE releases ADP from DnaK; ATP binding to DnaK triggers the release of the substrate protein, thus completing the reaction cycle. Several rounds of ATP-dependent interactions between DnaJ, DnaK and GrpE are required for fully efficient folding. Also involved, together with DnaK and GrpE, in the DNA replication of plasmids through activation of initiation proteins. This is Chaperone protein DnaJ from Nitratidesulfovibrio vulgaris (strain DSM 19637 / Miyazaki F) (Desulfovibrio vulgaris).